Here is a 58-residue protein sequence, read N- to C-terminus: Probable mRNA interferase HicA 2 (58 aa).

This sequence belongs to the HicA mRNA interferase family. As to quaternary structure, probably forms a complex with the cognate antitoxin HicB 2 which inhibits the mRNA interferase activity.

Its function is as follows. Toxic component of a type II toxin-antitoxin (TA) system. A probable translation-independent mRNA interferase. The protein is Probable mRNA interferase HicA 2 (hicA2) of Photorhabdus laumondii subsp. laumondii (strain DSM 15139 / CIP 105565 / TT01) (Photorhabdus luminescens subsp. laumondii).